Consider the following 381-residue polypeptide: Cytochrome b (381 aa).

4 helical membrane passes run 31-51 (FGFLSSICLIVQILTGIFLAM), 75-97 (WLLRYIHTNGASMFFIVVYIHIF), 112-132 (VWVIGVLILLLMILTAFIGYV), and 178-198 (FFSLHYLMPFVIAAVSLVHLA). The heme b site is built by H81 and H95. Heme b-binding residues include H182 and H196. H201 lines the a ubiquinone pocket. The next 4 helical transmembrane spans lie at 224–244 (FIVKDFLGMVIFIIFFSIFVY), 288–308 (LGGVTAMISAIAILAFLPWIH), 320–340 (LYRLFYWVMISCCLILGWIGG), and 347–367 (YVIIGQIASIYYFIYFIILLP).

This sequence belongs to the cytochrome b family. As to quaternary structure, the main subunits of complex b-c1 are: cytochrome b, cytochrome c1 and the Rieske protein. Heme b is required as a cofactor.

The protein localises to the mitochondrion inner membrane. Component of the ubiquinol-cytochrome c reductase complex (complex III or cytochrome b-c1 complex) that is part of the mitochondrial respiratory chain. The b-c1 complex mediates electron transfer from ubiquinol to cytochrome c. Contributes to the generation of a proton gradient across the mitochondrial membrane that is then used for ATP synthesis. This is Cytochrome b (MT-CYB) from Chondrus crispus (Carrageen Irish moss).